A 183-amino-acid polypeptide reads, in one-letter code: Tetrahydromethanopterin S-methyltransferase subunit A 2 (183 aa).

Residues 1–101 lie on the Cytoplasmic side of the membrane; sequence MFLMVEKKPV…TMKALHSNGV (101 aa). H87 is a 5-hydroxybenzimidazolylcob(I)amide binding site. A helical transmembrane segment spans residues 102–118; that stretch reads DLETGRIIGATGAIPYI. Residues 119-183 are Extracellular-facing; the sequence is ENMPEEAIER…IGKGDSEENT (65 aa).

The protein belongs to the MtrA family. In terms of assembly, the complex is composed of 8 subunits; MtrA, MtrB, MtrC, MtrD, MtrE, MtrF, MtrG and MtrH. The cofactor is 5-hydroxybenzimidazolylcob(I)amide.

Its subcellular location is the cell membrane. It catalyses the reaction 5-methyl-5,6,7,8-tetrahydromethanopterin + coenzyme M + 2 Na(+)(in) = 5,6,7,8-tetrahydromethanopterin + methyl-coenzyme M + 2 Na(+)(out). It functions in the pathway one-carbon metabolism; methanogenesis from CO(2); methyl-coenzyme M from 5,10-methylene-5,6,7,8-tetrahydromethanopterin: step 2/2. In terms of biological role, part of a complex that catalyzes the formation of methyl-coenzyme M and tetrahydromethanopterin from coenzyme M and methyl-tetrahydromethanopterin. This is an energy-conserving, sodium-ion translocating step. The chain is Tetrahydromethanopterin S-methyltransferase subunit A 2 from Methanothermobacter thermautotrophicus (strain ATCC 29096 / DSM 1053 / JCM 10044 / NBRC 100330 / Delta H) (Methanobacterium thermoautotrophicum).